Reading from the N-terminus, the 135-residue chain is uncharacterized protein (135 aa).

The 70-residue stretch at threonine 2–cysteine 71 folds into the HTH merR-type domain. The H-T-H motif DNA-binding region spans threonine 5 to lysine 24.

This is an uncharacterized protein from Haemophilus influenzae (strain ATCC 51907 / DSM 11121 / KW20 / Rd).